Reading from the N-terminus, the 281-residue chain is Protein synthesis inhibitor I (281 aa).

A2 carries the post-translational modification N-acetylalanine. E175 is a catalytic residue.

Belongs to the ribosome-inactivating protein family. Type 1 RIP subfamily.

The protein resides in the cytoplasm. It catalyses the reaction Endohydrolysis of the N-glycosidic bond at one specific adenosine on the 28S rRNA.. In terms of biological role, inhibits the elongation phase of protein synthesis. It inactivates fungal ribosomes even more effectively than mammalian ribosomes and is thought to function as a constitutive antifungal agent in plants. In Hordeum vulgare (Barley), this protein is Protein synthesis inhibitor I (RIP30).